The following is a 149-amino-acid chain: Probable conjugal transfer protein TrbE part 1 (149 aa).

The protein belongs to the TrbE/VirB4 family.

The sequence is that of Probable conjugal transfer protein TrbE part 1 (trbEA) from Sinorhizobium fredii (strain NBRC 101917 / NGR234).